Here is a 592-residue protein sequence, read N- to C-terminus: V-type ATP synthase alpha chain (592 aa).

ATP is bound at residue 232–239 (GPFGAGKT).

It belongs to the ATPase alpha/beta chains family.

The catalysed reaction is ATP + H2O + 4 H(+)(in) = ADP + phosphate + 5 H(+)(out). Its function is as follows. Produces ATP from ADP in the presence of a proton gradient across the membrane. The V-type alpha chain is a catalytic subunit. This Clostridium botulinum (strain Alaska E43 / Type E3) protein is V-type ATP synthase alpha chain.